We begin with the raw amino-acid sequence, 886 residues long: Alanine--tRNA ligase (886 aa).

Zn(2+)-binding residues include His-564, His-568, Cys-666, and His-670.

The protein belongs to the class-II aminoacyl-tRNA synthetase family. Zn(2+) is required as a cofactor.

It is found in the cytoplasm. The enzyme catalyses tRNA(Ala) + L-alanine + ATP = L-alanyl-tRNA(Ala) + AMP + diphosphate. Its function is as follows. Catalyzes the attachment of alanine to tRNA(Ala) in a two-step reaction: alanine is first activated by ATP to form Ala-AMP and then transferred to the acceptor end of tRNA(Ala). Also edits incorrectly charged Ser-tRNA(Ala) and Gly-tRNA(Ala) via its editing domain. This chain is Alanine--tRNA ligase, found in Prochlorococcus marinus (strain MIT 9312).